Here is a 434-residue protein sequence, read N- to C-terminus: CinA-like protein (434 aa).

It belongs to the CinA family.

The chain is CinA-like protein from Mycobacterium avium (strain 104).